Here is a 158-residue protein sequence, read N- to C-terminus: Fluoride-specific ion channel FluC 2 (158 aa).

4 helical membrane-spanning segments follow: residues 25 to 45 (AWHGQAPVVAVVALGGGIGGT), 63 to 83 (WTTFWVNVVGCAVIGVFMVVI), 95 to 115 (PFFGTGVLGGFTTFSTYAVDI), and 126 to 146 (TALAYLAATLLAALAAVRLAA). Positions 103 and 106 each coordinate Na(+).

The protein belongs to the fluoride channel Fluc/FEX (TC 1.A.43) family.

Its subcellular location is the cell membrane. The catalysed reaction is fluoride(in) = fluoride(out). Its activity is regulated as follows. Na(+) is not transported, but it plays an essential structural role and its presence is essential for fluoride channel function. Its function is as follows. Fluoride-specific ion channel. Important for reducing fluoride concentration in the cell, thus reducing its toxicity. The polypeptide is Fluoride-specific ion channel FluC 2 (Streptomyces avermitilis (strain ATCC 31267 / DSM 46492 / JCM 5070 / NBRC 14893 / NCIMB 12804 / NRRL 8165 / MA-4680)).